Reading from the N-terminus, the 75-residue chain is Small ribosomal subunit protein bS18 (75 aa).

The protein belongs to the bacterial ribosomal protein bS18 family. In terms of assembly, part of the 30S ribosomal subunit. Forms a tight heterodimer with protein bS6.

Binds as a heterodimer with protein bS6 to the central domain of the 16S rRNA, where it helps stabilize the platform of the 30S subunit. The chain is Small ribosomal subunit protein bS18 from Aliivibrio fischeri (strain ATCC 700601 / ES114) (Vibrio fischeri).